The following is a 322-amino-acid chain: 26S proteasome non-ATPase regulatory subunit 7 (322 aa).

Residues 9 to 144 (VVVHPLVLLS…TEAYISVEEV (136 aa)) form the MPN domain. Lys180 participates in a covalent cross-link: Glycyl lysine isopeptide (Lys-Gly) (interchain with G-Cter in ubiquitin). N6-acetyllysine occurs at positions 204, 214, 314, and 315. A disordered region spans residues 281-322 (ANRDAEKKEGQEKEDSKKDRKDDKEKEKEKSDVKKEEKKEKK).

It belongs to the peptidase M67A family. Component of the 19S proteasome regulatory particle complex. The 26S proteasome consists of a 20S core particle (CP) and two 19S regulatory subunits (RP). The regulatory particle is made of a lid composed of 9 subunits including PSMD7, a base containing 6 ATPases and few additional components. Within the complex, PSMD7 interacts with subunit PSMD4 through their respective MPN domain. Interacts with TRIM5.

Its function is as follows. Component of the 26S proteasome, a multiprotein complex involved in the ATP-dependent degradation of ubiquitinated proteins. This complex plays a key role in the maintenance of protein homeostasis by removing misfolded or damaged proteins, which could impair cellular functions, and by removing proteins whose functions are no longer required. Therefore, the proteasome participates in numerous cellular processes, including cell cycle progression, apoptosis, or DNA damage repair. This is 26S proteasome non-ATPase regulatory subunit 7 (PSMD7) from Bos taurus (Bovine).